A 450-amino-acid polypeptide reads, in one-letter code: NADP-specific glutamate dehydrogenase (450 aa).

Residue Lys111 is part of the active site.

This sequence belongs to the Glu/Leu/Phe/Val dehydrogenases family. As to quaternary structure, homohexamer.

The catalysed reaction is L-glutamate + NADP(+) + H2O = 2-oxoglutarate + NH4(+) + NADPH + H(+). The protein is NADP-specific glutamate dehydrogenase (GDHA) of Laccaria bicolor (strain S238N-H82 / ATCC MYA-4686) (Bicoloured deceiver).